Consider the following 114-residue polypeptide: MNVLLGGLVIFATFVTLCNASCYIILNDMIPGDSTNECTDLKGNKHPINSKWRTDNCDSCTCREKEISCCTLVSTPVGYDTHKCQKIFNKEDCRISVVEKNDPSKTCEVNAWIM.

The first 20 residues, 1–20 (MNVLLGGLVIFATFVTLCNA), serve as a signal peptide directing secretion. 5 disulfides stabilise this stretch: Cys-22/Cys-70, Cys-38/Cys-62, Cys-57/Cys-93, Cys-60/Cys-69, and Cys-84/Cys-107.

Belongs to the beta-microseminoprotein family.

The protein localises to the secreted. This is Beta-microseminoprotein J1 (MSPJ) from Saguinus oedipus (Cotton-top tamarin).